We begin with the raw amino-acid sequence, 283 residues long: Aldo-keto reductase Mmcs_1938 (283 aa).

The Proton donor role is filled by tyrosine 58. NADPH is bound by residues glycine 196, leucine 198, valine 200, isoleucine 236, arginine 238, serine 239, alanine 240, arginine 244, serine 247, asparagine 248, and arginine 274.

It belongs to the aldo/keto reductase family.

In Mycobacterium sp. (strain MCS), this protein is Aldo-keto reductase Mmcs_1938.